Here is a 111-residue protein sequence, read N- to C-terminus: MANVYDLANELERAVRALPEYQAVLTAKSAIESDADAQVLWQDFLATQSKVQEMMQSGQMPSQEEQDEMSKLGEKIESNDLLKVYFDQQQRLSVYMSDIEKIVFAPMQDLM.

A compositionally biased stretch (polar residues) spans 52–63; it reads QEMMQSGQMPSQ. The disordered stretch occupies residues 52–71; it reads QEMMQSGQMPSQEEQDEMSK.

It belongs to the UPF0342 family.

This Streptococcus agalactiae serotype V (strain ATCC BAA-611 / 2603 V/R) protein is UPF0342 protein SAG1376.